A 224-amino-acid chain; its full sequence is MDLQKACDRISQEFETDIIMGANLLVQMIQSQRITSNTPVQTVQPVQPVQPVQSVQSVQSVQSVQSVQPVQPVQPVQPVQPVRVPEINPVLFSYLIPLIPFIQMYHIAQKDVVPKNPQVQKQDVSQFTPDGKFKIPINKTKTIKKSTSEKKTSPKKKTTSQQIKRVRLSDEERNILESQYSKNNFPSPEIRDELAKKIGKTPRQVQIWFQNKRCKDRKNLEKNN.

Residues 139–162 are disordered; sequence KTKTIKKSTSEKKTSPKKKTTSQQ. The segment at residues 161 to 220 is a DNA-binding region (homeobox); sequence QQIKRVRLSDEERNILESQYSKNNFPSPEIRDELAKKIGKTPRQVQIWFQNKRCKDRKNL.

The protein localises to the host nucleus. The protein is Putative homeobox protein R749 of Acanthamoeba polyphaga mimivirus (APMV).